The primary structure comprises 401 residues: Argininosuccinate synthase (401 aa).

9-17 (AYSGGLDTS) is a binding site for ATP. L-citrulline is bound at residue Y86. ATP is bound at residue G116. Residues T118, N122, and D123 each coordinate L-aspartate. N122 contributes to the L-citrulline binding site. Residues R126, S174, S183, E259, and Y271 each contribute to the L-citrulline site.

Belongs to the argininosuccinate synthase family. Type 1 subfamily. As to quaternary structure, homotetramer.

Its subcellular location is the cytoplasm. The enzyme catalyses L-citrulline + L-aspartate + ATP = 2-(N(omega)-L-arginino)succinate + AMP + diphosphate + H(+). It participates in amino-acid biosynthesis; L-arginine biosynthesis; L-arginine from L-ornithine and carbamoyl phosphate: step 2/3. The polypeptide is Argininosuccinate synthase (Bacillus cereus (strain Q1)).